The chain runs to 409 residues: Immediate early response gene 5-like protein (409 aa).

2 disordered regions span residues 168 to 237 and 312 to 335; these read QPPH…PSSS and GQEEEDDEEEDAGDLGAEPPGGTP. The segment covering 184–195 has biased composition (pro residues); it reads QPGPAPLPPPAP. Composition is skewed to low complexity over residues 196-212 and 220-237; these read AALCPRDPRVPAACSAP and PPTVAASSPPASPAPSSS. Residues 313–324 show a composition bias toward acidic residues; that stretch reads QEEEDDEEEDAG.

The protein belongs to the IER family.

This is Immediate early response gene 5-like protein (Ier5l) from Rattus norvegicus (Rat).